A 338-amino-acid polypeptide reads, in one-letter code: POU domain, class 4, transcription factor 3 (338 aa).

The short motif at 56-65 (RAEALAAVDI) is the POU-IV box element. The region spanning 179–256 (DVESDPRELE…VLQAWLEEAE (78 aa)) is the POU-specific domain. Residues 274 to 333 (RKRKRTSIAAPEKRSLEAYFAIQPRPSSEKIAAIAEKLDLKKNVVRVWFCNQRQKQKRMK) constitute a DNA-binding region (homeobox).

Belongs to the POU transcription factor family. Class-4 subfamily. In terms of assembly, interacts with ISL1. In terms of tissue distribution, brain.

The protein localises to the nucleus. It localises to the cytoplasm. Acts as a transcriptional activator. Acts by binding to sequences related to the consensus octamer motif 5'-ATGCAAAT-3' in the regulatory regions of its target genes. Involved in the auditory system development, required for terminal differentiation of hair cells in the inner ear. This chain is POU domain, class 4, transcription factor 3, found in Mus musculus (Mouse).